The primary structure comprises 32 residues: Cytochrome b6-f complex subunit 6 (32 aa).

The chain crosses the membrane as a helical span at residues 4 to 26 (ITSYVGLLFTALGFTLGLYFGLT).

The protein belongs to the PetL family. As to quaternary structure, the 4 large subunits of the cytochrome b6-f complex are cytochrome b6, subunit IV (17 kDa polypeptide, PetD), cytochrome f and the Rieske protein, while the 4 small subunits are PetG, PetL, PetM and PetN. The complex functions as a dimer.

The protein resides in the plastid. Its subcellular location is the chloroplast thylakoid membrane. In terms of biological role, component of the cytochrome b6-f complex, which mediates electron transfer between photosystem II (PSII) and photosystem I (PSI), cyclic electron flow around PSI, and state transitions. PetL is important for photoautotrophic growth as well as for electron transfer efficiency and stability of the cytochrome b6-f complex. The chain is Cytochrome b6-f complex subunit 6 from Tetradesmus obliquus (Green alga).